Consider the following 347-residue polypeptide: sn-1 oleoyl-lipid 12-desaturase (347 aa).

2 helical membrane-spanning segments follow: residues 41–63 (AWSR…AIAP) and 67–85 (LLPV…FVIG). The Histidine box-1 motif lies at 86-90 (HDCGH). A helical transmembrane segment spans residues 98-118 (WVNNLVGHLAFLPLIYPFHSW). Positions 122–126 (HNHHH) match the Histidine box-2 motif. Transmembrane regions (helical) follow at residues 164-184 (LWWL…FAFE), 196-216 (LFVI…LGVW), and 218-238 (VVKF…TFTL). The Histidine box-3 motif lies at 286-290 (HHLST).

Belongs to the fatty acid desaturase type 2 family. The cofactor is Fe(2+).

It is found in the membrane. It carries out the reaction a 1-[(9Z)-octadecenoyl]-2-acyl-glycerolipid + 2 reduced [2Fe-2S]-[ferredoxin] + O2 + 2 H(+) = a 1-[(9Z,12Z)-octadecdienoyl]-2-acyl-glycerolipid + 2 oxidized [2Fe-2S]-[ferredoxin] + 2 H2O. The protein operates within lipid metabolism; polyunsaturated fatty acid biosynthesis. Its function is as follows. Desaturase involved in fatty acid biosynthesis. Introduces a double bond at carbon 12 of oleoyl groups (18:1) attached to the sn-1 position of the glycerol moiety of membrane glycerolipids. Can also efficiently catalyze the desaturation of palmitoleic acid (16:1) in vitro. This is sn-1 oleoyl-lipid 12-desaturase from Picosynechococcus sp. (strain ATCC 27264 / PCC 7002 / PR-6) (Agmenellum quadruplicatum).